The chain runs to 274 residues: Serine/threonine-protein kinase 1 (274 aa).

Residues 16–273 (AVLAPKVVNG…HSFLASRHDY (258 aa)) enclose the Protein kinase domain. ATP contacts are provided by residues 22-30 (VVNGRFGKM) and Lys-46. Catalysis depends on Asp-134, which acts as the Proton acceptor.

The protein belongs to the protein kinase superfamily. Ser/Thr protein kinase family.

It catalyses the reaction L-seryl-[protein] + ATP = O-phospho-L-seryl-[protein] + ADP + H(+). The enzyme catalyses L-threonyl-[protein] + ATP = O-phospho-L-threonyl-[protein] + ADP + H(+). In Orgyia pseudotsugata multicapsid polyhedrosis virus (OpMNPV), this protein is Serine/threonine-protein kinase 1 (PK1).